The sequence spans 313 residues: MSFPTVFIDGDQGTTGLQIHARLRDRTDVRLLTLPAAERKEAARRADALNACDIAILCLPDAAAREAVGFIRNPAVRVIDASSAHRTQPDWVYGFPEMADGHAHEIAHAKRVTNPGCYPTGAIGLLRPLLQAGLLPRDYPVSIHAVSGYSGGGRAAVDAFESGDAAARALPLQVYGLALAHKHVPEIRQHAGLAHRPFFVPAYGAYRQGIVLTIPIELRLLPAGVTGERLHACLAHHYADARHVDVMPLADARAATHLDPQALNGTNDLRLGVFVNANGGQVLLSAVFDNLGKGASGAAVQNLDLMLGARHAA.

C117 is an active-site residue.

It belongs to the NAGSA dehydrogenase family. Type 2 subfamily.

It localises to the cytoplasm. It catalyses the reaction N-acetyl-L-glutamate 5-semialdehyde + phosphate + NADP(+) = N-acetyl-L-glutamyl 5-phosphate + NADPH + H(+). It functions in the pathway amino-acid biosynthesis; L-arginine biosynthesis; N(2)-acetyl-L-ornithine from L-glutamate: step 3/4. Its function is as follows. Catalyzes the NADPH-dependent reduction of N-acetyl-5-glutamyl phosphate to yield N-acetyl-L-glutamate 5-semialdehyde. In Burkholderia cenocepacia (strain HI2424), this protein is N-acetyl-gamma-glutamyl-phosphate reductase.